A 240-amino-acid chain; its full sequence is Ubiquinone biosynthesis O-methyltransferase (240 aa).

Residues arginine 44, glycine 64, aspartate 85, and methionine 129 each contribute to the S-adenosyl-L-methionine site.

Belongs to the methyltransferase superfamily. UbiG/COQ3 family.

The catalysed reaction is a 3-demethylubiquinol + S-adenosyl-L-methionine = a ubiquinol + S-adenosyl-L-homocysteine + H(+). It carries out the reaction a 3-(all-trans-polyprenyl)benzene-1,2-diol + S-adenosyl-L-methionine = a 2-methoxy-6-(all-trans-polyprenyl)phenol + S-adenosyl-L-homocysteine + H(+). It functions in the pathway cofactor biosynthesis; ubiquinone biosynthesis. In terms of biological role, O-methyltransferase that catalyzes the 2 O-methylation steps in the ubiquinone biosynthetic pathway. The protein is Ubiquinone biosynthesis O-methyltransferase of Escherichia fergusonii (strain ATCC 35469 / DSM 13698 / CCUG 18766 / IAM 14443 / JCM 21226 / LMG 7866 / NBRC 102419 / NCTC 12128 / CDC 0568-73).